A 281-amino-acid polypeptide reads, in one-letter code: ATP phosphoribosyltransferase (281 aa).

It belongs to the ATP phosphoribosyltransferase family. Long subfamily. Mg(2+) serves as cofactor.

Its subcellular location is the cytoplasm. It catalyses the reaction 1-(5-phospho-beta-D-ribosyl)-ATP + diphosphate = 5-phospho-alpha-D-ribose 1-diphosphate + ATP. It functions in the pathway amino-acid biosynthesis; L-histidine biosynthesis; L-histidine from 5-phospho-alpha-D-ribose 1-diphosphate: step 1/9. Its activity is regulated as follows. Feedback inhibited by histidine. Its function is as follows. Catalyzes the condensation of ATP and 5-phosphoribose 1-diphosphate to form N'-(5'-phosphoribosyl)-ATP (PR-ATP). Has a crucial role in the pathway because the rate of histidine biosynthesis seems to be controlled primarily by regulation of HisG enzymatic activity. This Corynebacterium efficiens (strain DSM 44549 / YS-314 / AJ 12310 / JCM 11189 / NBRC 100395) protein is ATP phosphoribosyltransferase.